A 390-amino-acid polypeptide reads, in one-letter code: GTPase Obg (390 aa).

An Obg domain is found at 1–159; it reads MKFVDEATIK…RELRLELLLL (159 aa). The 174-residue stretch at 160–333 folds into the OBG-type G domain; it reads ADVGMLGLPN…LCDELADFMD (174 aa). Residues 166-173, 191-195, 213-216, 283-286, and 314-316 contribute to the GTP site; these read GLPNAGKS, FTTLI, DIPG, NKTD, and AAV. Positions 173 and 193 each coordinate Mg(2+).

It belongs to the TRAFAC class OBG-HflX-like GTPase superfamily. OBG GTPase family. As to quaternary structure, monomer. Mg(2+) is required as a cofactor.

The protein localises to the cytoplasm. An essential GTPase which binds GTP, GDP and possibly (p)ppGpp with moderate affinity, with high nucleotide exchange rates and a fairly low GTP hydrolysis rate. Plays a role in control of the cell cycle, stress response, ribosome biogenesis and in those bacteria that undergo differentiation, in morphogenesis control. The polypeptide is GTPase Obg (Aliivibrio fischeri (strain MJ11) (Vibrio fischeri)).